The following is a 434-amino-acid chain: MREVVTLQVGQCGNQMGAEFWKTLCKEHGISMCGVLQDSRDLGDRKDVFFYQADDNVFVPRAILVDLEPRVISQAPSFFSQESIFLSNEGGGAGNNWGHGYCVGKAMGNDVIDMIQREAEGCDALETFLLLHSIAGGTGSGFGSLLLERIKEEFPKKIVQTYSIFPNNDESSDVVVQPYNSVLTLHRLIENSDCIVVMDNSSLGRYTLDSLRIGTPTFDHINLLISTVMAASTSTIRFPGYMYCTHQSINNCLVPLDPLKFVVPSYTPFVCDEMSRVVRKATCSDVMRRLLLPKTRLAGYEQTKAQSVVSMLNILHGVEDSGEVSRTVMRFLDKGMVNFVPWMPPSFNVALGKCIANETRPSRVSGLSLTNSTGASLILSKISGQFDKLRKQRAFLDIYKRFGVEPEMFDEGKEIVQKALEEYHSAEMAAYPNH.

135-141 (AGGTGSG) serves as a coordination point for GTP.

It belongs to the tubulin family.

The protein resides in the cytoplasm. It localises to the cytoskeleton. Its subcellular location is the microtubule organizing center. It is found in the spindle pole body. In terms of biological role, tubulin is the major constituent of microtubules. The gamma chain is found at microtubule organizing centers (MTOC) such as the spindle poles or the centrosome, suggesting that it is involved in the minus-end nucleation of microtubule assembly. This Encephalitozoon cuniculi (strain GB-M1) (Microsporidian parasite) protein is Tubulin gamma chain (TUB4).